The chain runs to 328 residues: Putative thiosulfate sulfurtransferase mpst-1 (328 aa).

2 consecutive Rhodanese domains span residues N22 to T162 and K202 to S320. The Cysteine persulfide intermediate role is filled by C278.

It catalyses the reaction thiosulfate + hydrogen cyanide = thiocyanate + sulfite + 2 H(+). The sequence is that of Putative thiosulfate sulfurtransferase mpst-1 (mpst-1) from Caenorhabditis elegans.